Here is a 163-residue protein sequence, read N- to C-terminus: Putative 4-hydroxy-4-methyl-2-oxoglutarate aldolase (163 aa).

Substrate is bound by residues 76–79 and R98; that span reads GDMI. D99 is an a divalent metal cation binding site.

This sequence belongs to the class II aldolase/RraA-like family. Homotrimer. It depends on a divalent metal cation as a cofactor.

The catalysed reaction is 4-hydroxy-4-methyl-2-oxoglutarate = 2 pyruvate. The enzyme catalyses oxaloacetate + H(+) = pyruvate + CO2. Functionally, catalyzes the aldol cleavage of 4-hydroxy-4-methyl-2-oxoglutarate (HMG) into 2 molecules of pyruvate. Also contains a secondary oxaloacetate (OAA) decarboxylase activity due to the common pyruvate enolate transition state formed following C-C bond cleavage in the retro-aldol and decarboxylation reactions. This Pseudomonas fluorescens protein is Putative 4-hydroxy-4-methyl-2-oxoglutarate aldolase.